Consider the following 272-residue polypeptide: Nuclear transcription factor Y subunit A-1 (272 aa).

Disordered regions lie at residues 1-20 and 34-106; these read MQSK…HAVQ and SFGV…PALS. 2 stretches are compositionally biased toward polar residues: residues 46-61 and 82-92; these read IPSN…GSES and KDSQAATSSRS. The Subunit association domain (SAD) signature appears at 175–198; that stretch reads YVNAKQYEGILRRRKARAKAELER. The segment at residues 205–230 is a DNA-binding region (NFYA/HAP2-type); the sequence is KPYLHESRHKHAMRRARASGGRFAKK. Positions 206 to 272 are disordered; sequence PYLHESRHKH…NETLNSSGAP (67 aa). Positions 211–221 are enriched in basic residues; it reads SRHKHAMRRAR. Residues 229–247 are compositionally biased toward basic and acidic residues; it reads KKSEVEAGEDAGGRDRERG. Polar residues-rich tracts occupy residues 248–257 and 263–272; these read SATNSSGSEQ and NETLNSSGAP.

Belongs to the NFYA/HAP2 subunit family. As to quaternary structure, heterotrimeric transcription factor composed of three components, NF-YA, NF-YB and NF-YC. NF-YB and NF-YC must interact and dimerize for NF-YA association and DNA binding. Ubiquitous.

The protein resides in the nucleus. In terms of biological role, stimulates the transcription of various genes by recognizing and binding to a CCAAT motif in promoters. The protein is Nuclear transcription factor Y subunit A-1 (NFYA1) of Arabidopsis thaliana (Mouse-ear cress).